A 122-amino-acid polypeptide reads, in one-letter code: Large ribosomal subunit protein uL14 (122 aa).

This sequence belongs to the universal ribosomal protein uL14 family. As to quaternary structure, part of the 50S ribosomal subunit. Forms a cluster with proteins L3 and L19. In the 70S ribosome, L14 and L19 interact and together make contacts with the 16S rRNA in bridges B5 and B8.

Binds to 23S rRNA. Forms part of two intersubunit bridges in the 70S ribosome. The sequence is that of Large ribosomal subunit protein uL14 from Anaeromyxobacter sp. (strain Fw109-5).